The sequence spans 129 residues: Small ribosomal subunit protein uS11 (129 aa).

It belongs to the universal ribosomal protein uS11 family. In terms of assembly, part of the 30S ribosomal subunit. Interacts with proteins S7 and S18. Binds to IF-3.

Functionally, located on the platform of the 30S subunit, it bridges several disparate RNA helices of the 16S rRNA. Forms part of the Shine-Dalgarno cleft in the 70S ribosome. In Pseudomonas entomophila (strain L48), this protein is Small ribosomal subunit protein uS11.